Here is a 318-residue protein sequence, read N- to C-terminus: DNA primase small subunit PriS (318 aa).

Catalysis depends on residues Asp-95, Asp-97, and Asp-224.

Belongs to the eukaryotic-type primase small subunit family. As to quaternary structure, heterodimer of a small subunit (PriS) and a large subunit (PriL). Mg(2+) is required as a cofactor. Requires Mn(2+) as cofactor.

In terms of biological role, catalytic subunit of DNA primase, an RNA polymerase that catalyzes the synthesis of short RNA molecules used as primers for DNA polymerase during DNA replication. The small subunit contains the primase catalytic core and has DNA synthesis activity on its own. Binding to the large subunit stabilizes and modulates the activity, increasing the rate of DNA synthesis while decreasing the length of the DNA fragments, and conferring RNA synthesis capability. The DNA polymerase activity may enable DNA primase to also catalyze primer extension after primer synthesis. May also play a role in DNA repair. The protein is DNA primase small subunit PriS of Sulfurisphaera tokodaii (strain DSM 16993 / JCM 10545 / NBRC 100140 / 7) (Sulfolobus tokodaii).